The chain runs to 677 residues: Vertnin (677 aa).

2 disordered regions span residues 356-376 and 458-490; these read GSTG…SSPE and HSGS…KLSP. A compositionally biased stretch (basic and acidic residues) spans 458 to 472; the sequence is HSGSSEEGSDADKSQ.

Belongs to the vertnin family.

The protein localises to the nucleus. Its function is as follows. Functions as a transcriptional repressor that modulates bmp2b expression during dorsoventral patterning. The polypeptide is Vertnin (vrtn) (Danio rerio (Zebrafish)).